The chain runs to 283 residues: Heavy metal-associated isoprenylated plant protein 3 (283 aa).

Residues 1–22 show a composition bias toward basic and acidic residues; that stretch reads MGEKKNEGDNKKKGGDNKKKNE. The segment at 1–26 is disordered; sequence MGEKKNEGDNKKKGGDNKKKNETPSI. HMA domains lie at 25-88 and 132-195; these read SITV…KKKV and VTTA…KRAV. Residues Cys36 and Cys39 each contribute to the Zn(2+) site. The segment covering 82–129 has biased composition (basic and acidic residues); sequence EKTKKKVDLVSPQPKKEKEKENKNKNDEDKKKSEEKKKPDNNDKKPKE. Positions 82 to 131 are disordered; the sequence is EKTKKKVDLVSPQPKKEKEKENKNKNDEDKKKSEEKKKPDNNDKKPKETP. 2 residues coordinate Zn(2+): Cys143 and Cys146. Positions 198–230 are enriched in basic and acidic residues; sequence VPPKKEKDKENGNENGEKKKGGGGDGGGKEKTG. Positions 198–238 are disordered; the sequence is VPPKKEKDKENGNENGEKKKGGGGDGGGKEKTGNKGGGEGV. Position 280 is a cysteine methyl ester (Cys280). Cys280 carries S-farnesyl cysteine lipidation. Residues 281 to 283 constitute a propeptide, removed in mature form; it reads VVM.

This sequence belongs to the HIPP family.

The protein localises to the nucleus. It localises to the nucleolus. Its subcellular location is the cytoplasm. In terms of biological role, heavy-metal-binding protein. Binds high amounts of zinc. May act as an upstream regulator of the salicylate-dependent pathogen response. Involved in abiotic stress responses, and seed and flower development. The sequence is that of Heavy metal-associated isoprenylated plant protein 3 from Arabidopsis thaliana (Mouse-ear cress).